We begin with the raw amino-acid sequence, 485 residues long: Ribosomal protein S6 kinase beta-2 (485 aa).

Residues Met1 to Ala26 form a disordered region. Positions Leu7–Pro21 are enriched in acidic residues. Ser15 carries the post-translational modification Phosphoserine. Residues Phe67–Phe328 enclose the Protein kinase domain. Residues Leu73 to Val81 and Lys99 each bind ATP. Asp194 (proton acceptor) is an active-site residue. The 71-residue stretch at Arg329–Lys399 folds into the AGC-kinase C-terminal domain. The disordered stretch occupies residues Lys407–Arg485. Ser417 carries the post-translational modification Phosphoserine. The residue at position 420 (Thr420) is a Phosphothreonine. Ser423 bears the Phosphoserine mark. Residues Ser436–Pro469 show a composition bias toward pro residues. Residues Lys474–Arg480 carry the Nuclear localization signal motif. A compositionally biased stretch (basic residues) spans Lys474–Arg485. A Phosphoserine; by PKC modification is found at Ser476.

Belongs to the protein kinase superfamily. AGC Ser/Thr protein kinase family. S6 kinase subfamily. Post-translationally, phosphorylated and activated by MTOR. Phosphorylation by PKC within the NLS in response to mitogenic stimuli causes cytoplasmic retention.

Its subcellular location is the cytoplasm. It is found in the nucleus. The enzyme catalyses L-seryl-[protein] + ATP = O-phospho-L-seryl-[protein] + ADP + H(+). It carries out the reaction L-threonyl-[protein] + ATP = O-phospho-L-threonyl-[protein] + ADP + H(+). In terms of biological role, phosphorylates specifically ribosomal protein S6. Seems to act downstream of mTOR signaling in response to growth factors and nutrients to promote cell proliferation, cell growth and cell cycle progression in an alternative pathway regulated by MEAK7. This is Ribosomal protein S6 kinase beta-2 (Rps6kb2) from Mus musculus (Mouse).